The following is a 491-amino-acid chain: Lysine--tRNA ligase (491 aa).

Residues Glu-399 and Glu-406 each coordinate Mg(2+).

The protein belongs to the class-II aminoacyl-tRNA synthetase family. Homodimer. It depends on Mg(2+) as a cofactor.

The protein localises to the cytoplasm. It catalyses the reaction tRNA(Lys) + L-lysine + ATP = L-lysyl-tRNA(Lys) + AMP + diphosphate. The polypeptide is Lysine--tRNA ligase (Chloroflexus aurantiacus (strain ATCC 29366 / DSM 635 / J-10-fl)).